Consider the following 232-residue polypeptide: Ion-translocating oxidoreductase complex subunit E (232 aa).

A run of 6 helical transmembrane segments spans residues Leu12–Val31, Leu39–Leu59, Ile69–Ala89, Phe92–Ile112, Ala125–Leu145, and Pro182–Gly202.

Belongs to the NqrDE/RnfAE family. As to quaternary structure, the complex is composed of six subunits: RnfA, RnfB, RnfC, RnfD, RnfE and RnfG.

The protein localises to the cell inner membrane. Part of a membrane-bound complex that couples electron transfer with translocation of ions across the membrane. The protein is Ion-translocating oxidoreductase complex subunit E of Sodalis glossinidius (strain morsitans).